Consider the following 145-residue polypeptide: Cell wall teichoic acid glycosylation protein GtcA (145 aa).

4 consecutive transmembrane segments (helical) span residues 21–41 (ILMY…TFWL), 52–69 (IANT…YFSN), 96–116 (FLTY…LSIN), and 121–141 (KIWT…WIIF).

This sequence belongs to the GtrA family.

It is found in the cell membrane. Involved in the decoration of cell wall teichoic acid with galactose and glucose. This chain is Cell wall teichoic acid glycosylation protein GtcA (gtcA), found in Listeria monocytogenes serovar 1/2a (strain ATCC BAA-679 / EGD-e).